The following is a 259-amino-acid chain: Global transcriptional regulator CodY (259 aa).

The segment at 1 to 155 (MNLLEKTRKI…GATVVGMEIL (155 aa)) is GAF domain. Positions 203 to 222 (ASKIADRVGITRSVIVNALR) form a DNA-binding region, H-T-H motif. Residue S215 is modified to Phosphoserine.

This sequence belongs to the CodY family.

The protein localises to the cytoplasm. Its function is as follows. DNA-binding global transcriptional regulator which is involved in the adaptive response to starvation and acts by directly or indirectly controlling the expression of numerous genes in response to nutrient availability. During rapid exponential growth, CodY is highly active and represses genes whose products allow adaptation to nutrient depletion. The sequence is that of Global transcriptional regulator CodY from Lysinibacillus sphaericus (strain C3-41).